We begin with the raw amino-acid sequence, 1041 residues long: FHIP family protein GF15501 (1041 aa).

Disordered regions lie at residues 797 to 856 (RKGN…NKRR) and 907 to 987 (SNSS…SEPV). Position 803 is a phosphoserine (S803). Residues 808 to 824 (NLQQQQALNPAQQQGQQ) show a composition bias toward low complexity. Polar residues-rich tracts occupy residues 825–843 (RSAYATLSAATPVQATPTS) and 907–933 (SNSSSESRGFAPGQQSAGTCETSLSTQ). A compositionally biased stretch (low complexity) spans 942–973 (SGSSSNSSMGGSSQTLSAHSNATTTHSSSTLH).

It belongs to the FHIP family.

This Drosophila ananassae (Fruit fly) protein is FHIP family protein GF15501.